The chain runs to 355 residues: N-acetyl-gamma-glutamyl-phosphate reductase (355 aa).

C152 is a catalytic residue.

This sequence belongs to the NAGSA dehydrogenase family. Type 1 subfamily.

It localises to the cytoplasm. The enzyme catalyses N-acetyl-L-glutamate 5-semialdehyde + phosphate + NADP(+) = N-acetyl-L-glutamyl 5-phosphate + NADPH + H(+). Its pathway is amino-acid biosynthesis; L-arginine biosynthesis; N(2)-acetyl-L-ornithine from L-glutamate: step 3/4. Catalyzes the NADPH-dependent reduction of N-acetyl-5-glutamyl phosphate to yield N-acetyl-L-glutamate 5-semialdehyde. This chain is N-acetyl-gamma-glutamyl-phosphate reductase, found in Psychrobacter sp. (strain PRwf-1).